The primary structure comprises 261 residues: Small ribosomal subunit protein eS4 (261 aa).

One can recognise an S4 RNA-binding domain in the interval 42-104 (LPLVIFLRNR…TGEFFRLIYD (63 aa)).

The protein belongs to the eukaryotic ribosomal protein eS4 family.

This is Small ribosomal subunit protein eS4 (RpS4) from Carabus granulatus (Ground beetle).